The following is a 347-amino-acid chain: Biotin synthase (347 aa).

Residues 40–258 (AQVQVSTLLS…IAVARIVMPR (219 aa)) form the Radical SAM core domain. [4Fe-4S] cluster is bound by residues cysteine 55, cysteine 59, and cysteine 62. [2Fe-2S] cluster is bound by residues cysteine 99, cysteine 130, cysteine 190, and arginine 262.

Belongs to the radical SAM superfamily. Biotin synthase family. Homodimer. It depends on [4Fe-4S] cluster as a cofactor. [2Fe-2S] cluster is required as a cofactor.

It carries out the reaction (4R,5S)-dethiobiotin + (sulfur carrier)-SH + 2 reduced [2Fe-2S]-[ferredoxin] + 2 S-adenosyl-L-methionine = (sulfur carrier)-H + biotin + 2 5'-deoxyadenosine + 2 L-methionine + 2 oxidized [2Fe-2S]-[ferredoxin]. It participates in cofactor biosynthesis; biotin biosynthesis; biotin from 7,8-diaminononanoate: step 2/2. In terms of biological role, catalyzes the conversion of dethiobiotin (DTB) to biotin by the insertion of a sulfur atom into dethiobiotin via a radical-based mechanism. This chain is Biotin synthase, found in Stenotrophomonas maltophilia (strain R551-3).